The chain runs to 561 residues: Amidophosphoribosyltransferase 2, chloroplastic (561 aa).

The span at 1 to 27 shows a compositional bias: low complexity; that stretch reads MAATSSISSSLSLNAKPNKLSNNNNNN. Residues 1-36 form a disordered region; sequence MAATSSISSSLSLNAKPNKLSNNNNNNKPHRFLRNP. The N-terminal 53 residues, 1–53, are a transit peptide targeting the chloroplast; the sequence is MAATSSISSSLSLNAKPNKLSNNNNNNKPHRFLRNPFLNPSSSSFSPLPASIS. Catalysis depends on Cys-87, which acts as the Nucleophile. The region spanning 87–307 is the Glutamine amidotransferase type-2 domain; sequence CGVVGIYGDS…PGEVLVVDKD (221 aa). Positions 323, 469, 520, and 523 each coordinate [4Fe-4S] cluster.

The protein in the C-terminal section; belongs to the purine/pyrimidine phosphoribosyltransferase family. The cofactor is [4Fe-4S] cluster. It depends on Mg(2+) as a cofactor. Mostly expressed in leaves, and, to a lower extent, in cotyledons.

Its subcellular location is the plastid. The protein resides in the chloroplast stroma. The enzyme catalyses 5-phospho-beta-D-ribosylamine + L-glutamate + diphosphate = 5-phospho-alpha-D-ribose 1-diphosphate + L-glutamine + H2O. The protein operates within purine metabolism; IMP biosynthesis via de novo pathway; N(1)-(5-phospho-D-ribosyl)glycinamide from 5-phospho-alpha-D-ribose 1-diphosphate: step 1/2. Inhibited by the phenyltriazole acetic acid compound [5-(4-chlorophenyl)-1-isopropyl-1H-[1,2,4]triazol-3-yl]-acetic acid (DAS734), a bleaching herbicide. In terms of biological role, catalyzes the first committed step of 'de novo purine biosynthesis from glutamine. Required for chloroplast biogenesis and cell division. Confers sensitivity to the phenyltriazole acetic acid compound [5-(4-chlorophenyl)-1-isopropyl-1H-[1,2,4]triazol-3-yl]-acetic acid (DAS734), a bleaching herbicide. In Arabidopsis thaliana (Mouse-ear cress), this protein is Amidophosphoribosyltransferase 2, chloroplastic (ASE2).